An 85-amino-acid polypeptide reads, in one-letter code: MSKNIEHTMQFDLNKTKEALTKAILTEVYDSLQQKGYNPINQLVGYLISGDPTYITNYNGARALVRKLERDEILEEVIKSYLEIK.

This sequence belongs to the UPF0297 family.

The protein is UPF0297 protein CLL_A1175 of Clostridium botulinum (strain Eklund 17B / Type B).